Consider the following 248-residue polypeptide: 3-deoxy-manno-octulosonate cytidylyltransferase (248 aa).

The protein belongs to the KdsB family.

It localises to the cytoplasm. It catalyses the reaction 3-deoxy-alpha-D-manno-oct-2-ulosonate + CTP = CMP-3-deoxy-beta-D-manno-octulosonate + diphosphate. The protein operates within nucleotide-sugar biosynthesis; CMP-3-deoxy-D-manno-octulosonate biosynthesis; CMP-3-deoxy-D-manno-octulosonate from 3-deoxy-D-manno-octulosonate and CTP: step 1/1. It participates in bacterial outer membrane biogenesis; lipopolysaccharide biosynthesis. Activates KDO (a required 8-carbon sugar) for incorporation into bacterial lipopolysaccharide in Gram-negative bacteria. The protein is 3-deoxy-manno-octulosonate cytidylyltransferase of Escherichia coli O127:H6 (strain E2348/69 / EPEC).